A 122-amino-acid chain; its full sequence is Ribosomal protein eL22-like (122 aa).

3 positions are modified to phosphoserine: S112, S118, and S120.

The protein belongs to the eukaryotic ribosomal protein eL22 family.

This Bos taurus (Bovine) protein is Ribosomal protein eL22-like (RPL22L1).